The chain runs to 268 residues: Chymotrypsin-C (268 aa).

Residues 1 to 16 (MLGITVFTTFLAYASS) form the signal peptide. Positions 17–29 (CGAPIFQPNLSAR) are cleaved as a propeptide — activation peptide. 5 cysteine pairs are disulfide-bonded: cysteine 17/cysteine 141, cysteine 59/cysteine 75, cysteine 155/cysteine 222, cysteine 186/cysteine 202, and cysteine 212/cysteine 243. N-linked (GlcNAc...) asparagine glycosylation is present at asparagine 25. Residues 30-268 (VVGGEDAIPH…IDWINQKLQL (239 aa)) enclose the Peptidase S1 domain. Active-site charge relay system residues include histidine 74 and aspartate 121. Serine 216 acts as the Charge relay system in catalysis.

This sequence belongs to the peptidase S1 family. Elastase subfamily. Monomer. The zymogen is secreted as a ternary complex composed of procarboxypeptidase A, chymotrypsinogen C and proproteinase E. As to expression, pancreas.

The protein localises to the secreted. Its subcellular location is the extracellular space. It catalyses the reaction Preferential cleavage: Leu-|-Xaa, Tyr-|-Xaa, Phe-|-Xaa, Met-|-Xaa, Trp-|-Xaa, Gln-|-Xaa, Asn-|-Xaa.. In terms of biological role, regulates activation and degradation of trypsinogens and procarboxypeptidases by targeting specific cleavage sites within their zymogen precursors. Has chymotrypsin-type protease activity and hypocalcemic activity. This is Chymotrypsin-C (CTRC) from Bos taurus (Bovine).